The following is a 388-amino-acid chain: Processive diacylglycerol beta-glucosyltransferase (388 aa).

This sequence belongs to the glycosyltransferase 28 family. UgtP subfamily.

It is found in the cell membrane. The enzyme catalyses a 1,2-diacyl-3-O-(beta-D-glucopyranosyl)-sn-glycerol + UDP-alpha-D-glucose = a 1,2-diacyl-3-O-(beta-D-Glc-(1-&gt;6)-beta-D-Glc)-sn-glycerol + UDP + H(+). The catalysed reaction is a 1,2-diacyl-3-O-(beta-D-Glc-(1-&gt;6)-beta-D-Glc)-sn-glycerol + UDP-alpha-D-glucose = a 1,2-diacyl-3-O-(beta-D-Glc-(1-&gt;6)-beta-D-Glc-(1-&gt;6)-beta-D-Glc)-sn-glycerol + UDP + H(+). It carries out the reaction a 1,2-diacyl-sn-glycerol + UDP-alpha-D-glucose = a 1,2-diacyl-3-O-(beta-D-glucopyranosyl)-sn-glycerol + UDP + H(+). It participates in glycolipid metabolism; diglucosyl-diacylglycerol biosynthesis. In terms of biological role, processive glucosyltransferase involved in the biosynthesis of both the bilayer- and non-bilayer-forming membrane glucolipids. Is able to successively transfer up to three glucosyl residues to diacylglycerol (DAG), thereby catalyzing the formation of beta-monoglucosyl-DAG (3-O-(beta-D-glucopyranosyl)-1,2-diacyl-sn-glycerol), beta-diglucosyl-DAG (3-O-(beta-D-glucopyranosyl-beta-(1-&gt;6)-D-glucopyranosyl)-1,2-diacyl-sn-glycerol) and beta-triglucosyl-DAG (3-O-(beta-D-glucopyranosyl-beta-(1-&gt;6)-D-glucopyranosyl-beta-(1-&gt;6)-D-glucopyranosyl)-1,2-diacyl-sn-glycerol). Beta-diglucosyl-DAG is the predominant glycolipid found in Bacillales and is also used as a membrane anchor for lipoteichoic acid (LTA). In Bacillus cereus (strain ATCC 10987 / NRS 248), this protein is Processive diacylglycerol beta-glucosyltransferase.